A 353-amino-acid chain; its full sequence is Protein RecA (353 aa).

67–74 is an ATP binding site; that stretch reads GPESSGKT.

This sequence belongs to the RecA family.

The protein localises to the cytoplasm. Functionally, can catalyze the hydrolysis of ATP in the presence of single-stranded DNA, the ATP-dependent uptake of single-stranded DNA by duplex DNA, and the ATP-dependent hybridization of homologous single-stranded DNAs. It interacts with LexA causing its activation and leading to its autocatalytic cleavage. In Shewanella sediminis (strain HAW-EB3), this protein is Protein RecA.